Here is a 491-residue protein sequence, read N- to C-terminus: Glutamate--tRNA ligase (491 aa).

Residues 10–20 carry the 'HIGH' region motif; that stretch reads PSPTGYLHIGG. Residues 243-247 carry the 'KMSKS' region motif; that stretch reads KISKR. Position 246 (Lys-246) interacts with ATP.

This sequence belongs to the class-I aminoacyl-tRNA synthetase family. Glutamate--tRNA ligase type 1 subfamily. Monomer.

It is found in the cytoplasm. It catalyses the reaction tRNA(Glu) + L-glutamate + ATP = L-glutamyl-tRNA(Glu) + AMP + diphosphate. Functionally, catalyzes the attachment of glutamate to tRNA(Glu) in a two-step reaction: glutamate is first activated by ATP to form Glu-AMP and then transferred to the acceptor end of tRNA(Glu). The sequence is that of Glutamate--tRNA ligase from Desulfotalea psychrophila (strain LSv54 / DSM 12343).